A 370-amino-acid polypeptide reads, in one-letter code: GTPase Obg (370 aa).

The Obg domain maps to 1–159 (MKFIDEARIE…RMLRLELKVL (159 aa)). The region spanning 160-334 (ADVGLLGMPN…LCYAIYDYLA (175 aa)) is the OBG-type G domain. GTP is bound by residues 166–173 (GMPNAGKS), 191–195 (FTTLA), 213–216 (DIPG), 284–287 (NKLD), and 315–317 (SAL). Residues serine 173 and threonine 193 each contribute to the Mg(2+) site. Residues 344–370 (EEEDLATDVRFRDAPPADGGATPGGDA) form a disordered region.

The protein belongs to the TRAFAC class OBG-HflX-like GTPase superfamily. OBG GTPase family. Monomer. Mg(2+) is required as a cofactor.

It localises to the cytoplasm. An essential GTPase which binds GTP, GDP and possibly (p)ppGpp with moderate affinity, with high nucleotide exchange rates and a fairly low GTP hydrolysis rate. Plays a role in control of the cell cycle, stress response, ribosome biogenesis and in those bacteria that undergo differentiation, in morphogenesis control. The sequence is that of GTPase Obg from Burkholderia ambifaria (strain MC40-6).